Reading from the N-terminus, the 231-residue chain is MSQTPKHIISIVPAAGIGSRMGAEIPKQYLQLNEQSILGHTLDCLLSHPSIEKVIVALNPEDEFFARLPQAQHAKLQAVIGGKERADSVLSALTVAPTDAWALVHDAARPCLNHQDIDKLIESASSFPQGAILGAPVRDTMKRSNAQGLITETVCREKLWHALTPQFFPVQNLKQNLSNALAAGALITDEASAMEWAGVAPGIVAGRADNIKVTHPDDLQLASLFLKSAAQ.

It belongs to the IspD/TarI cytidylyltransferase family. IspD subfamily.

The enzyme catalyses 2-C-methyl-D-erythritol 4-phosphate + CTP + H(+) = 4-CDP-2-C-methyl-D-erythritol + diphosphate. The protein operates within isoprenoid biosynthesis; isopentenyl diphosphate biosynthesis via DXP pathway; isopentenyl diphosphate from 1-deoxy-D-xylulose 5-phosphate: step 2/6. In terms of biological role, catalyzes the formation of 4-diphosphocytidyl-2-C-methyl-D-erythritol from CTP and 2-C-methyl-D-erythritol 4-phosphate (MEP). The protein is 2-C-methyl-D-erythritol 4-phosphate cytidylyltransferase of Shewanella pealeana (strain ATCC 700345 / ANG-SQ1).